The primary structure comprises 131 residues: Glycine cleavage system H protein (131 aa).

One can recognise a Lipoyl-binding domain in the interval 24–106 (TVRVGITDYA…YGEGWLVELQ (83 aa)). Position 65 is an N6-lipoyllysine (lysine 65).

Belongs to the GcvH family. As to quaternary structure, the glycine cleavage system is composed of four proteins: P, T, L and H. (R)-lipoate serves as cofactor.

Its function is as follows. The glycine cleavage system catalyzes the degradation of glycine. The H protein shuttles the methylamine group of glycine from the P protein to the T protein. The protein is Glycine cleavage system H protein of Mycolicibacterium gilvum (strain PYR-GCK) (Mycobacterium gilvum (strain PYR-GCK)).